A 154-amino-acid chain; its full sequence is MAARLCCQLDPARDVLCLRPVGAESCGRPVSGSLGGLSSPSPSAVPADHGAHLSLRGLPVCAFSSAGPCALRFTSARRMETTVNAHQILPKVLHKRTLGLSAMSTTDLEAYFKDCLFKDWEELGEEIRLKVFVLGGCRHKLVCVPAPCNFFTSA.

The interval Pro68–Phe117 is mitochondrial targeting sequence.

It belongs to the orthohepadnavirus protein X family. In terms of assembly, may form homodimer. May interact with host CEBPA, CFLAR, CREB1, DDB1, E4F1, HBXIP, HSPD1/HSP60, NFKBIA, POLR2E and SMAD4. Interacts with host SMC5-SMC6 complex and induces its degradation. Interacts with host TRPC4AP; leading to prevent ubiquitination of TRPC4AP. Interacts with host PLSCR1; this interaction promotes ubiquitination and degradation of HBx and impairs HBx-mediated cell proliferation. In terms of processing, a fraction may be phosphorylated in insect cells and HepG2 cells, a human hepatoblastoma cell line. Phosphorylated in vitro by host protein kinase C or mitogen-activated protein kinase. N-acetylated in insect cells.

The protein resides in the host cytoplasm. It is found in the host nucleus. Its subcellular location is the host mitochondrion. Its function is as follows. Multifunctional protein that plays a role in silencing host antiviral defenses and promoting viral transcription. Does not seem to be essential for HBV infection. May be directly involved in development of cirrhosis and liver cancer (hepatocellular carcinoma). Most of cytosolic activities involve modulation of cytosolic calcium. The effect on apoptosis is controversial depending on the cell types in which the studies have been conducted. May induce apoptosis by localizing in mitochondria and causing loss of mitochondrial membrane potential. May also modulate apoptosis by binding host CFLAR, a key regulator of the death-inducing signaling complex (DISC). Promotes viral transcription by using the host E3 ubiquitin ligase DDB1 to target the SMC5-SMC6 complex to proteasomal degradation. This host complex would otherwise bind to viral episomal DNA, and prevents its transcription. Moderately stimulates transcription of many different viral and cellular transcription elements. Promoters and enhancers stimulated by HBx contain DNA binding sites for NF-kappa-B, AP-1, AP-2, c-EBP, ATF/CREB, or the calcium-activated factor NF-AT. This chain is Protein X, found in Hepatitis B virus genotype E (isolate Cote d'Ivoire/ABI-212/2003) (HBV-E).